Here is a 469-residue protein sequence, read N- to C-terminus: Glutamate--tRNA ligase 1 (469 aa).

Positions Pro-9 to Gly-19 match the 'HIGH' region motif. Residues Cys-98, Cys-100, Cys-125, and Glu-127 each contribute to the Zn(2+) site. A 'KMSKS' region motif is present at residues Arg-236–Arg-240. Residue Lys-239 participates in ATP binding.

Belongs to the class-I aminoacyl-tRNA synthetase family. Glutamate--tRNA ligase type 1 subfamily. In terms of assembly, monomer. It depends on Zn(2+) as a cofactor.

It is found in the cytoplasm. The catalysed reaction is tRNA(Glu) + L-glutamate + ATP = L-glutamyl-tRNA(Glu) + AMP + diphosphate. In terms of biological role, catalyzes the attachment of glutamate to tRNA(Glu) in a two-step reaction: glutamate is first activated by ATP to form Glu-AMP and then transferred to the acceptor end of tRNA(Glu). This is Glutamate--tRNA ligase 1 from Nitrosococcus oceani (strain ATCC 19707 / BCRC 17464 / JCM 30415 / NCIMB 11848 / C-107).